The primary structure comprises 445 residues: UPF0210 protein SSA_2018 (445 aa).

This sequence belongs to the UPF0210 family. In terms of assembly, homodimer.

In Streptococcus sanguinis (strain SK36), this protein is UPF0210 protein SSA_2018.